Consider the following 339-residue polypeptide: 2-deoxy-scyllo-inosamine dehydrogenase (339 aa).

Zn(2+) is bound by residues Cys-37, His-59, Cys-88, Cys-91, Cys-94, Cys-102, and Glu-143.

This sequence belongs to the zinc-containing alcohol dehydrogenase family. DOIA dehydrogenase subfamily. Zn(2+) is required as a cofactor.

It carries out the reaction 2-deoxy-scyllo-inosamine + NADP(+) = 3-amino-2,3-dideoxy-scyllo-inosose + NADPH + H(+). The catalysed reaction is 2-deoxy-scyllo-inosamine + NAD(+) = 3-amino-2,3-dideoxy-scyllo-inosose + NADH + H(+). It functions in the pathway metabolic intermediate biosynthesis; 2-deoxystreptamine biosynthesis; 2-deoxystreptamine from D-glucose 6-phosphate: step 3/4. It participates in antibiotic biosynthesis; tobramycin biosynthesis. Functionally, catalyzes the oxidation of 2-deoxy-scyllo-inosamine (DOIA) with NAD(+) or NADP(+), forming 3-amino-2,3-dideoxy-scyllo-inosose (amino-DOI). This Streptoalloteichus tenebrarius (strain ATCC 17920 / DSM 40477 / JCM 4838 / CBS 697.72 / NBRC 16177 / NCIMB 11028 / NRRL B-12390 / A12253. 1 / ISP 5477) (Streptomyces tenebrarius) protein is 2-deoxy-scyllo-inosamine dehydrogenase (tobE).